The primary structure comprises 368 residues: Biotin synthase (368 aa).

Positions 74–309 (CCGNVVDLCS…QQILRYAGGR (236 aa)) constitute a Radical SAM core domain. Residues Cys-92, Cys-96, and Cys-99 each coordinate [4Fe-4S] cluster. [2Fe-2S] cluster contacts are provided by Cys-137, Cys-174, Cys-234, and Arg-304.

The protein belongs to the radical SAM superfamily. Biotin synthase family. As to quaternary structure, homodimer. [4Fe-4S] cluster is required as a cofactor. [2Fe-2S] cluster serves as cofactor.

The catalysed reaction is (4R,5S)-dethiobiotin + (sulfur carrier)-SH + 2 reduced [2Fe-2S]-[ferredoxin] + 2 S-adenosyl-L-methionine = (sulfur carrier)-H + biotin + 2 5'-deoxyadenosine + 2 L-methionine + 2 oxidized [2Fe-2S]-[ferredoxin]. It functions in the pathway cofactor biosynthesis; biotin biosynthesis; biotin from 7,8-diaminononanoate: step 2/2. Functionally, catalyzes the conversion of dethiobiotin (DTB) to biotin by the insertion of a sulfur atom into dethiobiotin via a radical-based mechanism. This is Biotin synthase from Rippkaea orientalis (strain PCC 8801 / RF-1) (Cyanothece sp. (strain PCC 8801)).